A 258-amino-acid chain; its full sequence is Synapse differentiation-inducing gene protein 1 (258 aa).

Residues 1 to 181 (MAGVVEQKSG…NFLVMPPRDH (181 aa)) are Cytoplasmic-facing. S137 carries the phosphoserine modification. The helical transmembrane segment at 182–202 (LGLSVFSMLCCFWPLGIAAFY) threads the bilayer. At 203–228 (LSHETNKAVAKGDFHQASTSSRRALF) the chain is on the extracellular side. Residues 229–249 (LAVLSITIGTGIYVGVAVALI) constitute an intramembrane region (helical). Topologically, residues 250–258 (AYLSKSNHL) are extracellular.

This sequence belongs to the CD225/Dispanin family. In terms of assembly, homodimer. Interacts with GRIA1 and GRIA2.

The protein localises to the cell membrane. It localises to the early endosome membrane. The protein resides in the postsynaptic density membrane. It is found in the synapse. Its subcellular location is the cell projection. The protein localises to the dendrite. It localises to the dendritic spine. Functionally, may regulate AMPA receptor content at nascent synapses, and have a role in postsynaptic development and maturation. The chain is Synapse differentiation-inducing gene protein 1 (SYNDIG1) from Bos taurus (Bovine).